Consider the following 422-residue polypeptide: Elongation factor 1-alpha (422 aa).

The tr-type G domain occupies 5-221 (KPHMNLAVIG…DELKEPEKPS (217 aa)). The tract at residues 14-21 (GHIDHGKS) is G1. 14 to 21 (GHIDHGKS) contacts GTP. Mg(2+) is bound at residue Ser21. The interval 70–74 (GITID) is G2. The interval 91 to 94 (DCPG) is G3. Residues 91 to 95 (DCPGH) and 146 to 149 (NKMD) contribute to the GTP site. The G4 stretch occupies residues 146 to 149 (NKMD). Residues 185–187 (SAF) form a G5 region.

It belongs to the TRAFAC class translation factor GTPase superfamily. Classic translation factor GTPase family. EF-Tu/EF-1A subfamily.

It is found in the cytoplasm. The enzyme catalyses GTP + H2O = GDP + phosphate + H(+). In terms of biological role, GTP hydrolase that promotes the GTP-dependent binding of aminoacyl-tRNA to the A-site of ribosomes during protein biosynthesis. In Methanosarcina acetivorans (strain ATCC 35395 / DSM 2834 / JCM 12185 / C2A), this protein is Elongation factor 1-alpha.